The sequence spans 740 residues: Ion-translocating oxidoreductase complex subunit C (740 aa).

4Fe-4S ferredoxin-type domains follow at residues 369-397 and 407-436; these read GEPQ…QQLY and KATT…VQYF. 8 residues coordinate [4Fe-4S] cluster: Cys377, Cys380, Cys383, Cys387, Cys416, Cys419, Cys422, and Cys426. Positions 602 to 717 are disordered; it reads KLEQQQANAE…PEEQVDPRKA (116 aa). Low complexity-rich tracts occupy residues 605–615 and 637–647; these read QQQANAEPEQQ.

This sequence belongs to the 4Fe4S bacterial-type ferredoxin family. RnfC subfamily. As to quaternary structure, the complex is composed of six subunits: RsxA, RsxB, RsxC, RsxD, RsxE and RsxG. [4Fe-4S] cluster serves as cofactor.

Its subcellular location is the cell inner membrane. In terms of biological role, part of a membrane-bound complex that couples electron transfer with translocation of ions across the membrane. Required to maintain the reduced state of SoxR. This is Ion-translocating oxidoreductase complex subunit C from Escherichia coli (strain ATCC 8739 / DSM 1576 / NBRC 3972 / NCIMB 8545 / WDCM 00012 / Crooks).